The chain runs to 361 residues: Aminomethyltransferase (361 aa).

It belongs to the GcvT family. As to quaternary structure, the glycine cleavage system is composed of four proteins: P, T, L and H.

It carries out the reaction N(6)-[(R)-S(8)-aminomethyldihydrolipoyl]-L-lysyl-[protein] + (6S)-5,6,7,8-tetrahydrofolate = N(6)-[(R)-dihydrolipoyl]-L-lysyl-[protein] + (6R)-5,10-methylene-5,6,7,8-tetrahydrofolate + NH4(+). In terms of biological role, the glycine cleavage system catalyzes the degradation of glycine. This Bacteroides thetaiotaomicron (strain ATCC 29148 / DSM 2079 / JCM 5827 / CCUG 10774 / NCTC 10582 / VPI-5482 / E50) protein is Aminomethyltransferase.